A 170-amino-acid chain; its full sequence is NADH-ubiquinone oxidoreductase chain 6 (170 aa).

5 helical membrane passes run 1–21 (MIYM…AVAS), 26–46 (FYAA…IVSF), 49–69 (SFLS…VFAY), 86–106 (VVFY…FLGG), and 138–158 (WVII…GIWV).

The protein belongs to the complex I subunit 6 family. As to quaternary structure, core subunit of respiratory chain NADH dehydrogenase (Complex I) which is composed of 45 different subunits.

The protein localises to the mitochondrion inner membrane. The enzyme catalyses a ubiquinone + NADH + 5 H(+)(in) = a ubiquinol + NAD(+) + 4 H(+)(out). Its function is as follows. Core subunit of the mitochondrial membrane respiratory chain NADH dehydrogenase (Complex I) which catalyzes electron transfer from NADH through the respiratory chain, using ubiquinone as an electron acceptor. Essential for the catalytic activity and assembly of complex I. In Xenopus laevis (African clawed frog), this protein is NADH-ubiquinone oxidoreductase chain 6 (mt-nd6).